Reading from the N-terminus, the 428-residue chain is tRNA(Ile)-lysidine synthase (428 aa).

28–33 lines the ATP pocket; it reads SGGVDS.

This sequence belongs to the tRNA(Ile)-lysidine synthase family.

It is found in the cytoplasm. The catalysed reaction is cytidine(34) in tRNA(Ile2) + L-lysine + ATP = lysidine(34) in tRNA(Ile2) + AMP + diphosphate + H(+). In terms of biological role, ligates lysine onto the cytidine present at position 34 of the AUA codon-specific tRNA(Ile) that contains the anticodon CAU, in an ATP-dependent manner. Cytidine is converted to lysidine, thus changing the amino acid specificity of the tRNA from methionine to isoleucine. The chain is tRNA(Ile)-lysidine synthase from Streptococcus pyogenes serotype M1.